Consider the following 819-residue polypeptide: Tegument protein UL47 homolog (819 aa).

A compositionally biased stretch (basic residues) spans 1–15; sequence MQSGHYNRRQSRRQR. Disordered regions lie at residues 1–42 and 58–221; these read MQSG…THPP and LNSE…DYFS. The short motif at 11–31 is the Nuclear localization signal element; the sequence is SRRQRISSNTTDSPRHTHGTR. Over residues 32–42 the composition is skewed to polar residues; that stretch reads YRSTNWYTHPP. Over residues 62–72 the composition is skewed to acidic residues; sequence MDQDSSSDASD. Residues 82 to 93 show a composition bias toward polar residues; it reads STYNGSEQNTST. Residues 94-109 show a composition bias toward basic and acidic residues; the sequence is SRHENRIFKLTEREAN. 5 repeat units span residues 117 to 132, 133 to 148, 149 to 164, 165 to 190, and 191 to 206. The segment at 117–218 is 6 X 16 AA approximate tandem repeats; sequence DAIDDEGEAE…IDDEGEAEED (102 aa). Over residues 118–219 the composition is skewed to acidic residues; sequence AIDDEGEAEE…DDEGEAEEDY (102 aa). The 1-6; truncated repeat unit spans residues 207–218; that stretch reads DAIDDEGEAEED. A Nuclear export signal motif is present at residues 785–807; the sequence is QPIPSVDLAENLMQYRNEILGLD.

The protein belongs to the alphaherpesvirinae HHV-1 UL47 family. Interacts with US3 kinase. Interacts with ORF24 and ORF27; these interactions seem important for efficient virion nuclear egress. Interacts with ORF17/VHS. Interacts with ORF9. Post-translationally, phosphorylated by US3. This phosphorylation is required for proper nuclear localization.

It localises to the virion tegument. It is found in the host nucleus. Its subcellular location is the host cytoplasm. Its function is as follows. Tegument protein that can bind to various RNA transcripts. Plays a role in the attenuation of selective viral and cellular mRNA degradation by modulating the activity of host shutoff RNase ORF17/VHS. Also plays a role in the primary envelopment of virions in the perinuclear space, probably by interacting with two nuclear egress proteins ORF24 and ORF27. This Varicella-zoster virus (strain Dumas) (HHV-3) protein is Tegument protein UL47 homolog.